The chain runs to 96 residues: Small ribosomal subunit protein bS6 (96 aa).

The protein belongs to the bacterial ribosomal protein bS6 family.

Binds together with bS18 to 16S ribosomal RNA. In Beutenbergia cavernae (strain ATCC BAA-8 / DSM 12333 / CCUG 43141 / JCM 11478 / NBRC 16432 / NCIMB 13614 / HKI 0122), this protein is Small ribosomal subunit protein bS6.